A 1106-amino-acid chain; its full sequence is Carbamoyl phosphate synthase large chain (1106 aa).

The segment at 1–402 (MPRREDIRSV…SFQKALRSLE (402 aa)) is carboxyphosphate synthetic domain. ATP-binding residues include Arg-129, Arg-169, Gly-175, Gly-176, Glu-208, Val-210, Glu-215, Gly-241, Val-242, His-243, Gln-285, and Glu-299. The region spanning 133 to 328 (KKAMEKIGVR…IAKIAALLSI (196 aa)) is the ATP-grasp 1 domain. Mg(2+)-binding residues include Gln-285, Glu-299, and Asn-301. 3 residues coordinate Mn(2+): Gln-285, Glu-299, and Asn-301. Residues 403–582 (IDRYGFGSDG…YSSYDEEDES (180 aa)) form an oligomerization domain region. The carbamoyl phosphate synthetic domain stretch occupies residues 583 to 964 (DVTNAKSVMI…AFLKSQYMAG (382 aa)). Residues 707-898 (VEVLEKLKLN…IVKYATRIMM (192 aa)) form the ATP-grasp 2 domain. Positions 743, 782, 784, 789, 814, 815, 816, 817, 857, and 869 each coordinate ATP. Residues Gln-857, Glu-869, and Asn-871 each contribute to the Mg(2+) site. Positions 857, 869, and 871 each coordinate Mn(2+). Residues 965-1106 (DELPSQGTVF…QEIHAMPKIL (142 aa)) form the MGS-like domain. Positions 965–1106 (DELPSQGTVF…QEIHAMPKIL (142 aa)) are allosteric domain.

This sequence belongs to the CarB family. In terms of assembly, composed of two chains; the small (or glutamine) chain promotes the hydrolysis of glutamine to ammonia, which is used by the large (or ammonia) chain to synthesize carbamoyl phosphate. Tetramer of heterodimers (alpha,beta)4. It depends on Mg(2+) as a cofactor. Requires Mn(2+) as cofactor.

The enzyme catalyses hydrogencarbonate + L-glutamine + 2 ATP + H2O = carbamoyl phosphate + L-glutamate + 2 ADP + phosphate + 2 H(+). It catalyses the reaction hydrogencarbonate + NH4(+) + 2 ATP = carbamoyl phosphate + 2 ADP + phosphate + 2 H(+). Its pathway is amino-acid biosynthesis; L-arginine biosynthesis; carbamoyl phosphate from bicarbonate: step 1/1. It functions in the pathway pyrimidine metabolism; UMP biosynthesis via de novo pathway; (S)-dihydroorotate from bicarbonate: step 1/3. Large subunit of the glutamine-dependent carbamoyl phosphate synthetase (CPSase). CPSase catalyzes the formation of carbamoyl phosphate from the ammonia moiety of glutamine, carbonate, and phosphate donated by ATP, constituting the first step of 2 biosynthetic pathways, one leading to arginine and/or urea and the other to pyrimidine nucleotides. The large subunit (synthetase) binds the substrates ammonia (free or transferred from glutamine from the small subunit), hydrogencarbonate and ATP and carries out an ATP-coupled ligase reaction, activating hydrogencarbonate by forming carboxy phosphate which reacts with ammonia to form carbamoyl phosphate. This chain is Carbamoyl phosphate synthase large chain, found in Leptospira interrogans serogroup Icterohaemorrhagiae serovar copenhageni (strain Fiocruz L1-130).